The sequence spans 250 residues: 3-deoxy-manno-octulosonate cytidylyltransferase (250 aa).

Belongs to the KdsB family.

Its subcellular location is the cytoplasm. The enzyme catalyses 3-deoxy-alpha-D-manno-oct-2-ulosonate + CTP = CMP-3-deoxy-beta-D-manno-octulosonate + diphosphate. The protein operates within nucleotide-sugar biosynthesis; CMP-3-deoxy-D-manno-octulosonate biosynthesis; CMP-3-deoxy-D-manno-octulosonate from 3-deoxy-D-manno-octulosonate and CTP: step 1/1. Its pathway is bacterial outer membrane biogenesis; lipopolysaccharide biosynthesis. In terms of biological role, activates KDO (a required 8-carbon sugar) for incorporation into bacterial lipopolysaccharide in Gram-negative bacteria. The protein is 3-deoxy-manno-octulosonate cytidylyltransferase of Syntrophotalea carbinolica (strain DSM 2380 / NBRC 103641 / GraBd1) (Pelobacter carbinolicus).